The following is a 192-amino-acid chain: Pyridoxal 5'-phosphate synthase subunit PdxT (192 aa).

46–48 contacts L-glutamine; it reads GES. Cysteine 75 functions as the Nucleophile in the catalytic mechanism. Residues arginine 101 and 129–130 contribute to the L-glutamine site; that span reads IR. Active-site charge relay system residues include histidine 166 and glutamate 168.

This sequence belongs to the glutaminase PdxT/SNO family. As to quaternary structure, in the presence of PdxS, forms a dodecamer of heterodimers. Only shows activity in the heterodimer.

The catalysed reaction is aldehydo-D-ribose 5-phosphate + D-glyceraldehyde 3-phosphate + L-glutamine = pyridoxal 5'-phosphate + L-glutamate + phosphate + 3 H2O + H(+). It carries out the reaction L-glutamine + H2O = L-glutamate + NH4(+). Its pathway is cofactor biosynthesis; pyridoxal 5'-phosphate biosynthesis. Functionally, catalyzes the hydrolysis of glutamine to glutamate and ammonia as part of the biosynthesis of pyridoxal 5'-phosphate. The resulting ammonia molecule is channeled to the active site of PdxS. In Staphylococcus carnosus (strain TM300), this protein is Pyridoxal 5'-phosphate synthase subunit PdxT.